The following is a 94-amino-acid chain: MNKAEFIDLVKEAGKYNSKREAEEAISAFTLAVETALSKGESVELIGFGKFETAEQKGKEGKVPGSDKTYKTEDKRVPKFKPGKTLKQKVEEGK.

The segment at 56–94 (QKGKEGKVPGSDKTYKTEDKRVPKFKPGKTLKQKVEEGK) is disordered. A compositionally biased stretch (basic and acidic residues) spans 68–77 (KTYKTEDKRV). The span at 78 to 87 (PKFKPGKTLK) shows a compositional bias: basic residues.

It belongs to the bacterial histone-like protein family. In terms of assembly, homodimer.

Functionally, histone-like DNA-binding protein which is capable of wrapping DNA to stabilize it, and thus to prevent its denaturation under extreme environmental conditions. This Helicobacter pylori (strain ATCC 700392 / 26695) (Campylobacter pylori) protein is DNA-binding protein HU (hup).